The sequence spans 188 residues: dTTP/UTP pyrophosphatase (188 aa).

Residue Asp-70 is the Proton acceptor of the active site.

Belongs to the Maf family. YhdE subfamily. Requires a divalent metal cation as cofactor.

Its subcellular location is the cytoplasm. The enzyme catalyses dTTP + H2O = dTMP + diphosphate + H(+). The catalysed reaction is UTP + H2O = UMP + diphosphate + H(+). Nucleoside triphosphate pyrophosphatase that hydrolyzes dTTP and UTP. May have a dual role in cell division arrest and in preventing the incorporation of modified nucleotides into cellular nucleic acids. The protein is dTTP/UTP pyrophosphatase of Clostridium botulinum (strain Eklund 17B / Type B).